Consider the following 448-residue polypeptide: MGRLFGTSGIRMKNLSPKIAYKVGLAVAKKYKKVVVGRDTRTTGKLIETALTAGILNGGGEVTTINIVPTPVLGFNARNYDVGIMITASHNPPEYNGIKLFNKNGLAFNKKEEDEIEEIIFKEDFIEVEWHSVGEIWEDSRAIRNYMEHILKNVEINEKFNVVIDCANASACLVSPYLFTDLGCHVISVNSHMDGRFIGRLPEPDEKNLKKTMDMIKGLNMSGDNYIGIAHDGDADRMVAIDEKGRLADFDKLLAAFSRYMVEKTGNKKIVTTVDASMIIDEYLKDLDVEIIRTKVGDVAVAEEMIKNSAVFGGEPSGTWIHADIHLTPDGILSGLRVLEMLDFYNKKLYEILDEIPSYVNLREKIPCEDDKKEKVMSYVIENGESLFKTVPETVDGARFNLENGWVLIRPSGTEPYIRVRVEAKNNKDAKELLEKGIKLVKEALSAL.

Ser89 functions as the Phosphoserine intermediate in the catalytic mechanism. Ser89, Asp232, Asp234, and Asp236 together coordinate Mg(2+). Ser89 carries the phosphoserine modification.

It belongs to the phosphohexose mutase family. As to quaternary structure, forms large aggregates. Requires Mg(2+) as cofactor. In terms of processing, activated by phosphorylation.

It carries out the reaction alpha-D-glucosamine 1-phosphate = D-glucosamine 6-phosphate. Functionally, catalyzes the conversion of glucosamine-6-phosphate to glucosamine-1-phosphate. In Methanocaldococcus jannaschii (strain ATCC 43067 / DSM 2661 / JAL-1 / JCM 10045 / NBRC 100440) (Methanococcus jannaschii), this protein is Phosphoglucosamine mutase (glmM).